A 105-amino-acid polypeptide reads, in one-letter code: Large ribosomal subunit protein uL24 (105 aa).

The protein belongs to the universal ribosomal protein uL24 family. Part of the 50S ribosomal subunit.

Its function is as follows. One of two assembly initiator proteins, it binds directly to the 5'-end of the 23S rRNA, where it nucleates assembly of the 50S subunit. One of the proteins that surrounds the polypeptide exit tunnel on the outside of the subunit. This is Large ribosomal subunit protein uL24 from Sorangium cellulosum (strain So ce56) (Polyangium cellulosum (strain So ce56)).